Reading from the N-terminus, the 897-residue chain is 3'-5' exonuclease DinG (897 aa).

Residues 8–161 (VVDLETTGNQ…DEDAATTAKL (154 aa)) enclose the Exonuclease domain. The Helicase ATP-binding domain occupies 241 to 496 (SKAVDQLGLT…KAIDQLEKQR (256 aa)). 276–283 (ASLGSGKS) serves as a coordination point for ATP. The short motif at 448–451 (DEAH) is the DEAH box element. Positions 703–883 (NIDEYVASIV…NYRQKKGDIQ (181 aa)) constitute a Helicase C-terminal domain.

It belongs to the helicase family. DinG subfamily. Type 2 sub-subfamily.

Its function is as follows. 3'-5' exonuclease. The polypeptide is 3'-5' exonuclease DinG (Staphylococcus aureus (strain bovine RF122 / ET3-1)).